We begin with the raw amino-acid sequence, 224 residues long: Large ribosomal subunit protein uL16z (224 aa).

The protein belongs to the universal ribosomal protein uL16 family. In terms of assembly, component of the small ribosomal subunit. Mature ribosomes consist of a small (40S) and a large (60S) subunit. The 40S subunit contains about 33 different proteins and 1 molecule of RNA (18S). The 60S subunit contains about 49 different proteins and 3 molecules of RNA (25S, 5.8S and 5S).

This is Large ribosomal subunit protein uL16z (SC34) from Oryza sativa subsp. indica (Rice).